The following is a 338-amino-acid chain: Lipoate-protein ligase A (338 aa).

The 188-residue stretch at 29-216 folds into the BPL/LPL catalytic domain; it reads PATQRVLFLW…AFFAHYGERV (188 aa). ATP is bound by residues Arg-71, 76–79, and Lys-134; that span reads GAVF. Residue Lys-134 participates in (R)-lipoate binding.

The protein belongs to the LplA family. In terms of assembly, monomer.

The protein resides in the cytoplasm. It catalyses the reaction L-lysyl-[lipoyl-carrier protein] + (R)-lipoate + ATP = N(6)-[(R)-lipoyl]-L-lysyl-[lipoyl-carrier protein] + AMP + diphosphate + H(+). It participates in protein modification; protein lipoylation via exogenous pathway; protein N(6)-(lipoyl)lysine from lipoate: step 1/2. Its pathway is protein modification; protein lipoylation via exogenous pathway; protein N(6)-(lipoyl)lysine from lipoate: step 2/2. Functionally, catalyzes both the ATP-dependent activation of exogenously supplied lipoate to lipoyl-AMP and the transfer of the activated lipoyl onto the lipoyl domains of lipoate-dependent enzymes. In Salmonella choleraesuis (strain SC-B67), this protein is Lipoate-protein ligase A.